The primary structure comprises 952 residues: Probable mixed-linked glucan synthase 6 (952 aa).

Helical transmembrane passes span Leu102–Ile122 and Ala132–Leu152. Residue Asp227 is part of the active site. Residues Glu278–Arg308 adopt a coiled-coil conformation. Substrate-binding residues include Asp429 and Asp431. Asp636 is an active-site residue. The next 6 helical transmembrane spans lie at Leu718–Val738, Met744–Val764, Met782–Phe802, Trp834–Phe854, Trp865–Phe885, and Val898–Ile918.

It belongs to the glycosyltransferase 2 family. Plant cellulose synthase-like F subfamily.

It is found in the golgi apparatus membrane. Functionally, may catalyze both beta-1,3 and beta-1,4 glycosidic linkage on beta-D-glucan. Essential for (1,3;1,4)-beta-D-glucans synthesis in grasses and cereals (Poaceae). The mixed-linked glucans (which are not present in walls of dicotyledons or most other monocotyledonous plants) are particularly important constituents of the walls of the starchy endosperm and aleurone cells of cereal grains such as oats, wheat, rice and barley. They can account for up to 70% by weight of the wall. The polypeptide is Probable mixed-linked glucan synthase 6 (CSLF6) (Oryza sativa subsp. japonica (Rice)).